A 334-amino-acid chain; its full sequence is Adenine deaminase (334 aa).

Residues His-14, His-16, and His-194 each contribute to the Zn(2+) site. The Proton donor role is filled by Glu-197. Asp-275 is a binding site for Zn(2+). Residue Asp-276 coordinates substrate.

The protein belongs to the metallo-dependent hydrolases superfamily. Adenosine and AMP deaminases family. Adenine deaminase type 2 subfamily. Requires Zn(2+) as cofactor.

It carries out the reaction adenine + H2O + H(+) = hypoxanthine + NH4(+). In terms of biological role, catalyzes the hydrolytic deamination of adenine to hypoxanthine. Plays an important role in the purine salvage pathway and in nitrogen catabolism. In Hahella chejuensis (strain KCTC 2396), this protein is Adenine deaminase.